We begin with the raw amino-acid sequence, 424 residues long: Adenylosuccinate synthetase (424 aa).

GTP contacts are provided by residues 12–18 (GDEGKGK) and 40–42 (GHT). Catalysis depends on D13, which acts as the Proton acceptor. The Mg(2+) site is built by D13 and G40. IMP is bound by residues 13–16 (DEGK), 38–41 (NAGH), T130, R144, N220, T235, and R299. H41 functions as the Proton donor in the catalytic mechanism. Position 295 to 301 (295 to 301 (VTTGRRR)) interacts with substrate. GTP is bound by residues R301, 327–329 (KLD), and 412–414 (GTG).

The protein belongs to the adenylosuccinate synthetase family. Homodimer. Mg(2+) serves as cofactor.

The protein resides in the cytoplasm. The catalysed reaction is IMP + L-aspartate + GTP = N(6)-(1,2-dicarboxyethyl)-AMP + GDP + phosphate + 2 H(+). It functions in the pathway purine metabolism; AMP biosynthesis via de novo pathway; AMP from IMP: step 1/2. Plays an important role in the de novo pathway and in the salvage pathway of purine nucleotide biosynthesis. Catalyzes the first committed step in the biosynthesis of AMP from IMP. In Aspergillus flavus (strain ATCC 200026 / FGSC A1120 / IAM 13836 / NRRL 3357 / JCM 12722 / SRRC 167), this protein is Adenylosuccinate synthetase.